The chain runs to 282 residues: Trans,polycis-polyprenyl diphosphate synthase ((2Z,6E)-farnesyl diphosphate specific) (282 aa).

A disordered region spans residues 1–30 (MSPKTVFSTDTHREPIPPQPHPSGARPPQL). Asp44 is a catalytic residue. Asp44 is a Mg(2+) binding site. Substrate contacts are provided by residues 45-48 (GNGR), Trp49, Arg57, His61, and 89-91 (STE). Asn92 serves as the catalytic Proton acceptor. Substrate contacts are provided by residues Trp93, Arg95, Arg212, and 218–220 (RLS). Residue Glu231 coordinates Mg(2+). The segment at 262–282 (GGAEPNPVGPPQSAAGAQGQD) is disordered.

The protein belongs to the UPP synthase family. As to quaternary structure, homodimer. Mg(2+) is required as a cofactor.

The enzyme catalyses (2Z,6E)-farnesyl diphosphate + 10 isopentenyl diphosphate = di-trans,deca-cis-tridecaprenyl diphosphate + 10 diphosphate. The catalysed reaction is (2Z,6E)-farnesyl diphosphate + 11 isopentenyl diphosphate = di-trans,undeca-cis-tetradecaprenyl diphosphate + 11 diphosphate. It catalyses the reaction (2Z,6E)-farnesyl diphosphate + 9 isopentenyl diphosphate = di-trans,nona-cis-dodecaprenyl diphosphate + 9 diphosphate. Its function is as follows. Catalyzes the synthesis of Z,E-mixed prenyl diphosphates by a condensation of isopentenyl diphosphate to an allylic diphosphate. It shows a large substrate specificity accepting dimethylallyl diphosphate (DMAPP), GPP, E,Efarnesyl diphosphate (FPP), E,E,E-geranylgeranyl diphosphate (GGPP), neryl diphosphate (Z-GPP), and (2Z,6E)-farnesyl diphosphate (Z,E-FPP) as allylic substrates. The enzyme exhibits the highest activity when Z,E-FPP is employed as an allylic substrate. The major product is dodecaprenyl diphosphate (C60) under every allylic substrate conditions, but the enzyme is also able to synthesize even C70 prenyl diphosphate as the maximum chain-length product. The chain is Trans,polycis-polyprenyl diphosphate synthase ((2Z,6E)-farnesyl diphosphate specific) from Thermobifida fusca (strain YX).